A 301-amino-acid chain; its full sequence is UDP-N-acetylenolpyruvoylglucosamine reductase 1 (301 aa).

An FAD-binding PCMH-type domain is found at 29–196 (KIGGPADILI…LEAEFQLQIG (168 aa)). Residue Arg-174 is part of the active site. Ser-225 acts as the Proton donor in catalysis. Residue Glu-295 is part of the active site.

This sequence belongs to the MurB family. FAD serves as cofactor.

It is found in the cytoplasm. It carries out the reaction UDP-N-acetyl-alpha-D-muramate + NADP(+) = UDP-N-acetyl-3-O-(1-carboxyvinyl)-alpha-D-glucosamine + NADPH + H(+). Its pathway is cell wall biogenesis; peptidoglycan biosynthesis. Its function is as follows. Cell wall formation. This chain is UDP-N-acetylenolpyruvoylglucosamine reductase 1, found in Bacillus thuringiensis subsp. konkukian (strain 97-27).